Here is a 231-residue protein sequence, read N- to C-terminus: Ureidoacrylate amidohydrolase RutB (231 aa).

Catalysis depends on aspartate 25, which acts as the Proton acceptor. Lysine 134 is an active-site residue. Cysteine 167 functions as the Nucleophile in the catalytic mechanism.

The protein belongs to the isochorismatase family. RutB subfamily.

The catalysed reaction is (Z)-3-ureidoacrylate + H2O + H(+) = (Z)-3-aminoacrylate + NH4(+) + CO2. It catalyses the reaction (Z)-3-ureidoacrylate + H2O = (Z)-3-aminoacrylate + carbamate + H(+). The enzyme catalyses (Z)-2-methylureidoacrylate + H2O + H(+) = (Z)-2-methylaminoacrylate + NH4(+) + CO2. In terms of biological role, hydrolyzes ureidoacrylate to form aminoacrylate and carbamate. The carbamate hydrolyzes spontaneously, thereby releasing one of the nitrogen atoms of the pyrimidine ring as ammonia and one of its carbon atoms as CO2. This chain is Ureidoacrylate amidohydrolase RutB, found in Escherichia coli O157:H7 (strain EC4115 / EHEC).